Here is a 316-residue protein sequence, read N- to C-terminus: Olfactory receptor 4N4C (316 aa).

Residues Met-1–Leu-26 are Cytoplasmic-facing. A helical membrane pass occupies residues Val-27–Phe-47. Topologically, residues Thr-48–Thr-56 are extracellular. Residues Ala-57–Val-77 traverse the membrane as a helical segment. Residues Ala-78–Thr-99 are Cytoplasmic-facing. Cys-97 and Cys-179 are disulfide-bonded. A helical transmembrane segment spans residues Gln-100 to Phe-120. At Asp-121 to Ala-143 the chain is on the extracellular side. A helical transmembrane segment spans residues Met-144 to Leu-164. Residues Arg-165–Gly-204 are Cytoplasmic-facing. Residues Leu-205 to Val-225 form a helical membrane-spanning segment. Residues Arg-226–Arg-243 lie on the Extracellular side of the membrane. The helical transmembrane segment at Val-244–Ala-264 threads the bilayer. At Leu-265–Asp-268 the chain is on the cytoplasmic side. A helical transmembrane segment spans residues Lys-269–Leu-289. Topologically, residues Arg-290–Asn-316 are extracellular.

It belongs to the G-protein coupled receptor 1 family.

It localises to the membrane. In terms of biological role, odorant receptor. The polypeptide is Olfactory receptor 4N4C (Homo sapiens (Human)).